Reading from the N-terminus, the 97-residue chain is Co-chaperonin GroES (97 aa).

Belongs to the GroES chaperonin family. Heptamer of 7 subunits arranged in a ring. Interacts with the chaperonin GroEL.

The protein resides in the cytoplasm. In terms of biological role, together with the chaperonin GroEL, plays an essential role in assisting protein folding. The GroEL-GroES system forms a nano-cage that allows encapsulation of the non-native substrate proteins and provides a physical environment optimized to promote and accelerate protein folding. GroES binds to the apical surface of the GroEL ring, thereby capping the opening of the GroEL channel. In Klebsiella pneumoniae subsp. pneumoniae (strain ATCC 700721 / MGH 78578), this protein is Co-chaperonin GroES.